Here is a 302-residue protein sequence, read N- to C-terminus: Nucleotide-binding protein Bmul_0520/BMULJ_02739 (302 aa).

8–15 (GISGSGKS) contacts ATP. Residue 57-60 (DARS) participates in GTP binding.

This sequence belongs to the RapZ-like family.

In terms of biological role, displays ATPase and GTPase activities. The chain is Nucleotide-binding protein Bmul_0520/BMULJ_02739 from Burkholderia multivorans (strain ATCC 17616 / 249).